A 654-amino-acid chain; its full sequence is tRNA 5-methylaminomethyl-2-thiouridine biosynthesis bifunctional protein MnmC (654 aa).

The tract at residues 1 to 235 (MSDFQHAQLD…KREMLSGTYQ (235 aa)) is tRNA (mnm(5)s(2)U34)-methyltransferase. The segment at 261–654 (VGGGLAGCAS…LRDLVRGQRG (394 aa)) is FAD-dependent cmnm(5)s(2)U34 oxidoreductase.

This sequence in the N-terminal section; belongs to the methyltransferase superfamily. tRNA (mnm(5)s(2)U34)-methyltransferase family. It in the C-terminal section; belongs to the DAO family. The cofactor is FAD.

It is found in the cytoplasm. It catalyses the reaction 5-aminomethyl-2-thiouridine(34) in tRNA + S-adenosyl-L-methionine = 5-methylaminomethyl-2-thiouridine(34) in tRNA + S-adenosyl-L-homocysteine + H(+). Its function is as follows. Catalyzes the last two steps in the biosynthesis of 5-methylaminomethyl-2-thiouridine (mnm(5)s(2)U) at the wobble position (U34) in tRNA. Catalyzes the FAD-dependent demodification of cmnm(5)s(2)U34 to nm(5)s(2)U34, followed by the transfer of a methyl group from S-adenosyl-L-methionine to nm(5)s(2)U34, to form mnm(5)s(2)U34. The chain is tRNA 5-methylaminomethyl-2-thiouridine biosynthesis bifunctional protein MnmC from Pseudomonas aeruginosa (strain ATCC 15692 / DSM 22644 / CIP 104116 / JCM 14847 / LMG 12228 / 1C / PRS 101 / PAO1).